The following is a 194-amino-acid chain: FMN-dependent NADH:quinone oxidoreductase (194 aa).

Residues Ser9, 15–17 (SIS), and 85–88 (MYNF) contribute to the FMN site.

This sequence belongs to the azoreductase type 1 family. In terms of assembly, homodimer. It depends on FMN as a cofactor.

The enzyme catalyses 2 a quinone + NADH + H(+) = 2 a 1,4-benzosemiquinone + NAD(+). The catalysed reaction is N,N-dimethyl-1,4-phenylenediamine + anthranilate + 2 NAD(+) = 2-(4-dimethylaminophenyl)diazenylbenzoate + 2 NADH + 2 H(+). In terms of biological role, quinone reductase that provides resistance to thiol-specific stress caused by electrophilic quinones. Functionally, also exhibits azoreductase activity. Catalyzes the reductive cleavage of the azo bond in aromatic azo compounds to the corresponding amines. The chain is FMN-dependent NADH:quinone oxidoreductase from Xanthomonas oryzae pv. oryzae (strain KACC10331 / KXO85).